The following is a 398-amino-acid chain: Ornithine aminotransferase (398 aa).

Lys-255 bears the N6-(pyridoxal phosphate)lysine mark.

The protein belongs to the class-III pyridoxal-phosphate-dependent aminotransferase family. OAT subfamily. Requires pyridoxal 5'-phosphate as cofactor.

The protein localises to the cytoplasm. The enzyme catalyses a 2-oxocarboxylate + L-ornithine = L-glutamate 5-semialdehyde + an L-alpha-amino acid. It participates in amino-acid biosynthesis; L-proline biosynthesis; L-glutamate 5-semialdehyde from L-ornithine: step 1/1. Catalyzes the interconversion of ornithine to glutamate semialdehyde. This Geobacillus sp. (strain WCH70) protein is Ornithine aminotransferase.